The primary structure comprises 640 residues: Chaperone protein DnaK (640 aa).

Threonine 199 is subject to Phosphothreonine; by autocatalysis. A disordered region spans residues tyrosine 603–serine 640. Positions glutamine 611–glutamate 621 are enriched in basic and acidic residues. The span at glutamate 622–valine 632 shows a compositional bias: acidic residues.

This sequence belongs to the heat shock protein 70 family.

Acts as a chaperone. This is Chaperone protein DnaK from Nitrosococcus oceani (strain ATCC 19707 / BCRC 17464 / JCM 30415 / NCIMB 11848 / C-107).